We begin with the raw amino-acid sequence, 341 residues long: Ribosomal RNA small subunit methyltransferase H (341 aa).

Residues 47–49 (GGY), aspartate 64, phenylalanine 91, aspartate 109, and glutamine 116 each bind S-adenosyl-L-methionine. Positions 292-318 (VAASEDEASRNPRARSAKLRAGVRTPA) are disordered.

The protein belongs to the methyltransferase superfamily. RsmH family.

It is found in the cytoplasm. The enzyme catalyses cytidine(1402) in 16S rRNA + S-adenosyl-L-methionine = N(4)-methylcytidine(1402) in 16S rRNA + S-adenosyl-L-homocysteine + H(+). In terms of biological role, specifically methylates the N4 position of cytidine in position 1402 (C1402) of 16S rRNA. The chain is Ribosomal RNA small subunit methyltransferase H from Sinorhizobium fredii (strain NBRC 101917 / NGR234).